The sequence spans 269 residues: Hydroxyacylglutathione hydrolase (269 aa).

Zn(2+)-binding residues include His56, His58, Asp60, His61, His115, Asp137, and His177.

The protein belongs to the metallo-beta-lactamase superfamily. Glyoxalase II family. In terms of assembly, monomer. The cofactor is Zn(2+).

The catalysed reaction is an S-(2-hydroxyacyl)glutathione + H2O = a 2-hydroxy carboxylate + glutathione + H(+). It participates in secondary metabolite metabolism; methylglyoxal degradation; (R)-lactate from methylglyoxal: step 2/2. Its function is as follows. Thiolesterase that catalyzes the hydrolysis of S-D-lactoyl-glutathione to form glutathione and D-lactic acid. The sequence is that of Hydroxyacylglutathione hydrolase from Leptospira borgpetersenii serovar Hardjo-bovis (strain JB197).